A 289-amino-acid chain; its full sequence is 4-diphosphocytidyl-2-C-methyl-D-erythritol kinase (289 aa).

Lysine 16 is an active-site residue. 99–109 is an ATP binding site; that stretch reads PMGGGLGGGSS. The active site involves aspartate 141.

This sequence belongs to the GHMP kinase family. IspE subfamily.

The catalysed reaction is 4-CDP-2-C-methyl-D-erythritol + ATP = 4-CDP-2-C-methyl-D-erythritol 2-phosphate + ADP + H(+). The protein operates within isoprenoid biosynthesis; isopentenyl diphosphate biosynthesis via DXP pathway; isopentenyl diphosphate from 1-deoxy-D-xylulose 5-phosphate: step 3/6. Catalyzes the phosphorylation of the position 2 hydroxy group of 4-diphosphocytidyl-2C-methyl-D-erythritol. This chain is 4-diphosphocytidyl-2-C-methyl-D-erythritol kinase, found in Ralstonia pickettii (strain 12J).